The chain runs to 394 residues: NAD(P)H-quinone oxidoreductase subunit H (394 aa).

This sequence belongs to the complex I 49 kDa subunit family. As to quaternary structure, NDH-1 can be composed of about 15 different subunits; different subcomplexes with different compositions have been identified which probably have different functions.

It is found in the cellular thylakoid membrane. The catalysed reaction is a plastoquinone + NADH + (n+1) H(+)(in) = a plastoquinol + NAD(+) + n H(+)(out). It carries out the reaction a plastoquinone + NADPH + (n+1) H(+)(in) = a plastoquinol + NADP(+) + n H(+)(out). NDH-1 shuttles electrons from an unknown electron donor, via FMN and iron-sulfur (Fe-S) centers, to quinones in the respiratory and/or the photosynthetic chain. The immediate electron acceptor for the enzyme in this species is believed to be plastoquinone. Couples the redox reaction to proton translocation, and thus conserves the redox energy in a proton gradient. Cyanobacterial NDH-1 also plays a role in inorganic carbon-concentration. The polypeptide is NAD(P)H-quinone oxidoreductase subunit H (Synechococcus sp. (strain ATCC 27144 / PCC 6301 / SAUG 1402/1) (Anacystis nidulans)).